The chain runs to 202 residues: Holliday junction branch migration complex subunit RuvA (202 aa).

Residues 1 to 64 are domain I; the sequence is MIGRLRGSLA…EDAHLLYGFY (64 aa). The interval 65–143 is domain II; it reads EKRERELFRE…AWEALPGTFT (79 aa). The segment at 144–153 is flexible linker; that stretch reads LVSNGPNQAE. Positions 154–202 are domain III; that stretch reads PVASAESDAVSALISLGYKPQEASKAVSAIKEKDLSSADLIRRALKGMG.

This sequence belongs to the RuvA family. As to quaternary structure, homotetramer. Forms an RuvA(8)-RuvB(12)-Holliday junction (HJ) complex. HJ DNA is sandwiched between 2 RuvA tetramers; dsDNA enters through RuvA and exits via RuvB. An RuvB hexamer assembles on each DNA strand where it exits the tetramer. Each RuvB hexamer is contacted by two RuvA subunits (via domain III) on 2 adjacent RuvB subunits; this complex drives branch migration. In the full resolvosome a probable DNA-RuvA(4)-RuvB(12)-RuvC(2) complex forms which resolves the HJ.

It is found in the cytoplasm. The RuvA-RuvB-RuvC complex processes Holliday junction (HJ) DNA during genetic recombination and DNA repair, while the RuvA-RuvB complex plays an important role in the rescue of blocked DNA replication forks via replication fork reversal (RFR). RuvA specifically binds to HJ cruciform DNA, conferring on it an open structure. The RuvB hexamer acts as an ATP-dependent pump, pulling dsDNA into and through the RuvAB complex. HJ branch migration allows RuvC to scan DNA until it finds its consensus sequence, where it cleaves and resolves the cruciform DNA. The polypeptide is Holliday junction branch migration complex subunit RuvA (Pseudomonas syringae pv. syringae (strain B728a)).